The chain runs to 205 residues: Holliday junction branch migration complex subunit RuvA (205 aa).

A domain I region spans residues 1–64 (MIGKLKGVVD…EDMIRLYGFR (64 aa)). The segment at 65-143 (SDAEREWFRL…AFAPVDPALV (79 aa)) is domain II. Positions 144–152 (RLAGAVEAR) are flexible linker. The segment at 153 to 205 (TAPQPVADAISALVNLGYPQAQASAAVAAALQSAGAEAEAKTLIRLGLRELAR) is domain III.

Belongs to the RuvA family. Homotetramer. Forms an RuvA(8)-RuvB(12)-Holliday junction (HJ) complex. HJ DNA is sandwiched between 2 RuvA tetramers; dsDNA enters through RuvA and exits via RuvB. An RuvB hexamer assembles on each DNA strand where it exits the tetramer. Each RuvB hexamer is contacted by two RuvA subunits (via domain III) on 2 adjacent RuvB subunits; this complex drives branch migration. In the full resolvosome a probable DNA-RuvA(4)-RuvB(12)-RuvC(2) complex forms which resolves the HJ.

The protein localises to the cytoplasm. Functionally, the RuvA-RuvB-RuvC complex processes Holliday junction (HJ) DNA during genetic recombination and DNA repair, while the RuvA-RuvB complex plays an important role in the rescue of blocked DNA replication forks via replication fork reversal (RFR). RuvA specifically binds to HJ cruciform DNA, conferring on it an open structure. The RuvB hexamer acts as an ATP-dependent pump, pulling dsDNA into and through the RuvAB complex. HJ branch migration allows RuvC to scan DNA until it finds its consensus sequence, where it cleaves and resolves the cruciform DNA. The chain is Holliday junction branch migration complex subunit RuvA from Methylobacterium sp. (strain 4-46).